Here is a 209-residue protein sequence, read N- to C-terminus: Large ribosomal subunit protein uL3 (209 aa).

The segment at 141-164 (RAVGSMGGSSDPSRTFKSKKMPGH) is disordered.

It belongs to the universal ribosomal protein uL3 family. As to quaternary structure, part of the 50S ribosomal subunit. Forms a cluster with proteins L14 and L19.

One of the primary rRNA binding proteins, it binds directly near the 3'-end of the 23S rRNA, where it nucleates assembly of the 50S subunit. In Clostridium acetobutylicum (strain ATCC 824 / DSM 792 / JCM 1419 / IAM 19013 / LMG 5710 / NBRC 13948 / NRRL B-527 / VKM B-1787 / 2291 / W), this protein is Large ribosomal subunit protein uL3.